The chain runs to 456 residues: Phosphomannomutase (456 aa).

Serine 98 acts as the Phosphoserine intermediate in catalysis. The Mg(2+) site is built by serine 98, aspartate 245, aspartate 247, and aspartate 249.

Belongs to the phosphohexose mutase family. Mg(2+) serves as cofactor.

The enzyme catalyses alpha-D-mannose 1-phosphate = D-mannose 6-phosphate. Its pathway is nucleotide-sugar biosynthesis; GDP-alpha-D-mannose biosynthesis; alpha-D-mannose 1-phosphate from D-fructose 6-phosphate: step 2/2. Its function is as follows. Involved in the biosynthesis of the capsular polysaccharide colanic acid. The polypeptide is Phosphomannomutase (manB) (Escherichia coli (strain K12)).